Here is a 341-residue protein sequence, read N- to C-terminus: Methionine import ATP-binding protein MetN (341 aa).

The region spanning 2-241 (INLQDVSKVY…PKEQMTKRFV (240 aa)) is the ABC transporter domain. 38 to 45 (GYSGAGKS) is a binding site for ATP.

The protein belongs to the ABC transporter superfamily. Methionine importer (TC 3.A.1.24) family. The complex is composed of two ATP-binding proteins (MetN), two transmembrane proteins (MetP) and a solute-binding protein (MetQ).

It is found in the cell membrane. The enzyme catalyses L-methionine(out) + ATP + H2O = L-methionine(in) + ADP + phosphate + H(+). It carries out the reaction D-methionine(out) + ATP + H2O = D-methionine(in) + ADP + phosphate + H(+). Its function is as follows. Part of the ABC transporter complex MetNPQ involved in methionine import. Responsible for energy coupling to the transport system. It has also been shown to be involved in methionine sulfoxide transport. This is Methionine import ATP-binding protein MetN from Bacillus subtilis (strain 168).